The primary structure comprises 277 residues: Phosphoenolpyruvate synthase regulatory protein (277 aa).

ADP is bound at residue 157–164 (GVSRCGKT).

This sequence belongs to the pyruvate, phosphate/water dikinase regulatory protein family. PSRP subfamily.

It carries out the reaction [pyruvate, water dikinase] + ADP = [pyruvate, water dikinase]-phosphate + AMP + H(+). It catalyses the reaction [pyruvate, water dikinase]-phosphate + phosphate + H(+) = [pyruvate, water dikinase] + diphosphate. In terms of biological role, bifunctional serine/threonine kinase and phosphorylase involved in the regulation of the phosphoenolpyruvate synthase (PEPS) by catalyzing its phosphorylation/dephosphorylation. The protein is Phosphoenolpyruvate synthase regulatory protein of Escherichia coli O17:K52:H18 (strain UMN026 / ExPEC).